The chain runs to 278 residues: Ribosomal protein L11 methyltransferase (278 aa).

4 residues coordinate S-adenosyl-L-methionine: Thr131, Gly152, Asp173, and Asn214.

It belongs to the methyltransferase superfamily. PrmA family.

It is found in the cytoplasm. It catalyses the reaction L-lysyl-[protein] + 3 S-adenosyl-L-methionine = N(6),N(6),N(6)-trimethyl-L-lysyl-[protein] + 3 S-adenosyl-L-homocysteine + 3 H(+). Functionally, methylates ribosomal protein L11. This is Ribosomal protein L11 methyltransferase from Campylobacter lari (strain RM2100 / D67 / ATCC BAA-1060).